Here is a 428-residue protein sequence, read N- to C-terminus: Adenylosuccinate synthetase (428 aa).

GTP-binding positions include 12-18 and 40-42; these read GDEGKGK and GHT. The active-site Proton acceptor is aspartate 13. Residues aspartate 13 and glycine 40 each contribute to the Mg(2+) site. IMP is bound by residues 13 to 16, 38 to 41, threonine 128, arginine 142, glutamine 223, threonine 238, and arginine 302; these read DEGK and NAGH. The active-site Proton donor is histidine 41. 298–304 contributes to the substrate binding site; the sequence is TTTGRPR. GTP is bound by residues arginine 304, 330–332, and 412–414; these read KLD and SVG.

Belongs to the adenylosuccinate synthetase family. As to quaternary structure, homodimer. Mg(2+) serves as cofactor.

The protein localises to the cytoplasm. It catalyses the reaction IMP + L-aspartate + GTP = N(6)-(1,2-dicarboxyethyl)-AMP + GDP + phosphate + 2 H(+). Its pathway is purine metabolism; AMP biosynthesis via de novo pathway; AMP from IMP: step 1/2. Its function is as follows. Plays an important role in the de novo pathway of purine nucleotide biosynthesis. Catalyzes the first committed step in the biosynthesis of AMP from IMP. This is Adenylosuccinate synthetase from Brevibacillus brevis (strain 47 / JCM 6285 / NBRC 100599).